The following is a 331-amino-acid chain: Ferredoxin--NADP reductase (331 aa).

Residues Glu34, Gln42, Tyr47, Val87, Phe121, Asp285, and Thr325 each contribute to the FAD site.

This sequence belongs to the ferredoxin--NADP reductase type 2 family. As to quaternary structure, homodimer. FAD serves as cofactor.

The enzyme catalyses 2 reduced [2Fe-2S]-[ferredoxin] + NADP(+) + H(+) = 2 oxidized [2Fe-2S]-[ferredoxin] + NADPH. The protein is Ferredoxin--NADP reductase of Lactiplantibacillus plantarum (strain ATCC BAA-793 / NCIMB 8826 / WCFS1) (Lactobacillus plantarum).